A 441-amino-acid polypeptide reads, in one-letter code: ATP-dependent protease ATPase subunit HslU (441 aa).

Residues Ile-18, 60–65 (GVGKTE), Asp-254, Glu-319, and Arg-391 contribute to the ATP site.

This sequence belongs to the ClpX chaperone family. HslU subfamily. A double ring-shaped homohexamer of HslV is capped on each side by a ring-shaped HslU homohexamer. The assembly of the HslU/HslV complex is dependent on binding of ATP.

Its subcellular location is the cytoplasm. Its function is as follows. ATPase subunit of a proteasome-like degradation complex; this subunit has chaperone activity. The binding of ATP and its subsequent hydrolysis by HslU are essential for unfolding of protein substrates subsequently hydrolyzed by HslV. HslU recognizes the N-terminal part of its protein substrates and unfolds these before they are guided to HslV for hydrolysis. The chain is ATP-dependent protease ATPase subunit HslU from Shewanella denitrificans (strain OS217 / ATCC BAA-1090 / DSM 15013).